Reading from the N-terminus, the 315-residue chain is GTP cyclohydrolase MptA (315 aa).

It belongs to the GTP cyclohydrolase IV family. In terms of assembly, homodimer. Fe(2+) is required as a cofactor.

The catalysed reaction is GTP + H2O = 7,8-dihydroneopterin 2',3'-cyclic phosphate + formate + diphosphate + H(+). It functions in the pathway cofactor biosynthesis; 5,6,7,8-tetrahydromethanopterin biosynthesis. In terms of biological role, converts GTP to 7,8-dihydro-D-neopterin 2',3'-cyclic phosphate, the first intermediate in the biosynthesis of coenzyme methanopterin. In Methanococcus maripaludis (strain C6 / ATCC BAA-1332), this protein is GTP cyclohydrolase MptA.